Here is a 599-residue protein sequence, read N- to C-terminus: Elongation factor 4 (599 aa).

In terms of domain architecture, tr-type G spans 2 to 185 (ENIRNFSIIA…AITKRIPPPK (184 aa)). Residues 14–19 (DHGKST) and 132–135 (NKID) each bind GTP.

Belongs to the TRAFAC class translation factor GTPase superfamily. Classic translation factor GTPase family. LepA subfamily.

Its subcellular location is the cell inner membrane. The catalysed reaction is GTP + H2O = GDP + phosphate + H(+). Functionally, required for accurate and efficient protein synthesis under certain stress conditions. May act as a fidelity factor of the translation reaction, by catalyzing a one-codon backward translocation of tRNAs on improperly translocated ribosomes. Back-translocation proceeds from a post-translocation (POST) complex to a pre-translocation (PRE) complex, thus giving elongation factor G a second chance to translocate the tRNAs correctly. Binds to ribosomes in a GTP-dependent manner. The protein is Elongation factor 4 of Hydrogenobaculum sp. (strain Y04AAS1).